Consider the following 399-residue polypeptide: S-adenosylmethionine synthase (399 aa).

Residue histidine 16 participates in ATP binding. Residue aspartate 18 coordinates Mg(2+). Glutamate 44 is a K(+) binding site. L-methionine is bound by residues glutamate 57 and glutamine 100. Residues 100–110 (QSPDIAQGVDT) form a flexible loop region. Residues 175 to 177 (DGK), 246 to 247 (KF), aspartate 255, 261 to 262 (RK), alanine 278, and lysine 282 each bind ATP. Position 255 (aspartate 255) interacts with L-methionine. Lysine 286 lines the L-methionine pocket. Lysine 341 is covalently cross-linked (Isoglutamyl lysine isopeptide (Lys-Gln) (interchain with Q-Cter in protein Pup)).

Belongs to the AdoMet synthase family. In terms of assembly, homotetramer; dimer of dimers. The cofactor is Mg(2+). It depends on K(+) as a cofactor.

Its subcellular location is the cytoplasm. The enzyme catalyses L-methionine + ATP + H2O = S-adenosyl-L-methionine + phosphate + diphosphate. Its pathway is amino-acid biosynthesis; S-adenosyl-L-methionine biosynthesis; S-adenosyl-L-methionine from L-methionine: step 1/1. Catalyzes the formation of S-adenosylmethionine (AdoMet) from methionine and ATP. The overall synthetic reaction is composed of two sequential steps, AdoMet formation and the subsequent tripolyphosphate hydrolysis which occurs prior to release of AdoMet from the enzyme. In Mycolicibacterium smegmatis (strain ATCC 700084 / mc(2)155) (Mycobacterium smegmatis), this protein is S-adenosylmethionine synthase.